A 128-amino-acid chain; its full sequence is Gastrotropin (128 aa).

Ala2 carries the post-translational modification N-acetylalanine.

Belongs to the calycin superfamily. Fatty-acid binding protein (FABP) family. In terms of tissue distribution, predominantly expressed in ileum; also expressed in ovary.

It localises to the cytoplasm. The protein resides in the membrane. Its function is as follows. Binds to bile acids and is involved in enterohepatic bile acid metabolism. Required for efficient apical to basolateral transport of conjugated bile acids in ileal enterocytes. Stimulates gastric acid and pepsinogen secretion. This chain is Gastrotropin (Fabp6), found in Rattus norvegicus (Rat).